The sequence spans 459 residues: ATP synthase subunit beta (459 aa).

Residue 149-156 (GGAGVGKT) participates in ATP binding.

It belongs to the ATPase alpha/beta chains family. As to quaternary structure, F-type ATPases have 2 components, CF(1) - the catalytic core - and CF(0) - the membrane proton channel. CF(1) has five subunits: alpha(3), beta(3), gamma(1), delta(1), epsilon(1). CF(0) has three main subunits: a(1), b(2) and c(9-12). The alpha and beta chains form an alternating ring which encloses part of the gamma chain. CF(1) is attached to CF(0) by a central stalk formed by the gamma and epsilon chains, while a peripheral stalk is formed by the delta and b chains.

The protein localises to the cell inner membrane. It catalyses the reaction ATP + H2O + 4 H(+)(in) = ADP + phosphate + 5 H(+)(out). Functionally, produces ATP from ADP in the presence of a proton gradient across the membrane. The catalytic sites are hosted primarily by the beta subunits. The chain is ATP synthase subunit beta from Pseudomonas syringae pv. tomato (strain ATCC BAA-871 / DC3000).